A 446-amino-acid polypeptide reads, in one-letter code: Glutamyl-tRNA reductase (446 aa).

Residues 49–52, S107, 112–114, and Q118 contribute to the substrate site; these read TCNR and EPQ. Residue C50 is the Nucleophile of the active site. Residue 187 to 192 coordinates NADP(+); the sequence is GAGETI. The tract at residues 417-446 is disordered; it reads NANEDTRESVDKEQTGTTQGAARGDQRSTG. The segment covering 420 to 430 has biased composition (basic and acidic residues); sequence EDTRESVDKEQ.

This sequence belongs to the glutamyl-tRNA reductase family. In terms of assembly, homodimer.

The enzyme catalyses (S)-4-amino-5-oxopentanoate + tRNA(Glu) + NADP(+) = L-glutamyl-tRNA(Glu) + NADPH + H(+). The protein operates within porphyrin-containing compound metabolism; protoporphyrin-IX biosynthesis; 5-aminolevulinate from L-glutamyl-tRNA(Glu): step 1/2. In terms of biological role, catalyzes the NADPH-dependent reduction of glutamyl-tRNA(Glu) to glutamate 1-semialdehyde (GSA). The polypeptide is Glutamyl-tRNA reductase (Alkalilimnicola ehrlichii (strain ATCC BAA-1101 / DSM 17681 / MLHE-1)).